The chain runs to 244 residues: Cell division protein ZapD (244 aa).

This sequence belongs to the ZapD family. In terms of assembly, interacts with FtsZ.

Its subcellular location is the cytoplasm. Its function is as follows. Cell division factor that enhances FtsZ-ring assembly. Directly interacts with FtsZ and promotes bundling of FtsZ protofilaments, with a reduction in FtsZ GTPase activity. The sequence is that of Cell division protein ZapD from Shewanella baltica (strain OS185).